The chain runs to 173 residues: Probable calcium-binding protein CML14 (173 aa).

4 EF-hand domains span residues serine 21–arginine 56, proline 57–threonine 92, valine 97–proline 132, and leucine 133–aspartate 168. Positions 34, 36, 38, 40, 45, 70, 72, 74, 76, 81, 110, 112, 114, 121, 146, 148, 150, and 157 each coordinate Ca(2+).

In terms of biological role, potential calcium sensor. In Oryza sativa subsp. japonica (Rice), this protein is Probable calcium-binding protein CML14 (CML14).